We begin with the raw amino-acid sequence, 252 residues long: Eukaryotic translation initiation factor 3 subunit K (252 aa).

The PCI domain occupies 46-225 (FDCYANLALL…VKVPTNKENE (180 aa)).

The protein belongs to the eIF-3 subunit K family. In terms of assembly, component of the eukaryotic translation initiation factor 3 (eIF-3) complex.

It is found in the cytoplasm. Component of the eukaryotic translation initiation factor 3 (eIF-3) complex, which is involved in protein synthesis of a specialized repertoire of mRNAs and, together with other initiation factors, stimulates binding of mRNA and methionyl-tRNAi to the 40S ribosome. The eIF-3 complex specifically targets and initiates translation of a subset of mRNAs involved in cell proliferation. This Aspergillus terreus (strain NIH 2624 / FGSC A1156) protein is Eukaryotic translation initiation factor 3 subunit K.